We begin with the raw amino-acid sequence, 284 residues long: Acetyl-coenzyme A carboxylase carboxyl transferase subunit beta (284 aa).

In terms of domain architecture, CoA carboxyltransferase N-terminal spans 27–284 (LMTKCPSCKY…ELHDGGVRHV (258 aa)). Residues cysteine 31, cysteine 34, cysteine 50, and cysteine 52 each coordinate Zn(2+). The C4-type zinc-finger motif lies at 31 to 52 (CPSCKYMHYTKQLNENHKVCDC).

Belongs to the AccD/PCCB family. In terms of assembly, acetyl-CoA carboxylase is a heterohexamer composed of biotin carboxyl carrier protein (AccB), biotin carboxylase (AccC) and two subunits each of ACCase subunit alpha (AccA) and ACCase subunit beta (AccD). Zn(2+) serves as cofactor.

Its subcellular location is the cytoplasm. It catalyses the reaction N(6)-carboxybiotinyl-L-lysyl-[protein] + acetyl-CoA = N(6)-biotinyl-L-lysyl-[protein] + malonyl-CoA. It functions in the pathway lipid metabolism; malonyl-CoA biosynthesis; malonyl-CoA from acetyl-CoA: step 1/1. Component of the acetyl coenzyme A carboxylase (ACC) complex. Biotin carboxylase (BC) catalyzes the carboxylation of biotin on its carrier protein (BCCP) and then the CO(2) group is transferred by the transcarboxylase to acetyl-CoA to form malonyl-CoA. The protein is Acetyl-coenzyme A carboxylase carboxyl transferase subunit beta of Exiguobacterium sp. (strain ATCC BAA-1283 / AT1b).